The chain runs to 762 residues: ATP-dependent RNA helicase DBP10 (762 aa).

2 disordered regions span residues 20-50 (SLFANHADSDDEVQVHKQQPADLDFGDLLDN) and 65-88 (KQQRSSNRKTGSLQSKSAKKSGGF). Positions 41–50 (DLDFGDLLDN) are enriched in low complexity. A compositionally biased stretch (polar residues) spans 66–80 (QQRSSNRKTGSLQSK). The Q motif signature appears at 86 to 114 (GGFQAMGLNSNLLRAISRKGFSVPTPIQR). One can recognise a Helicase ATP-binding domain in the interval 117-289 (IPLVLERRDV…RAGLQEPSLI (173 aa)). 130–137 (ARTGSGKT) contacts ATP. The short motif at 237 to 240 (DEAD) is the DEAD box element. Disordered stretches follow at residues 333–363 (EGIEEETDEQQARKRKRDSERRNRKEKPTEH), 491–523 (MNQPLRKTKWTSSPEKTNPPGDDEEAWEDEESE), and 671–762 (VRNF…RAKR). Residues 334-511 (GIEEETDEQQ…SSPEKTNPPG (178 aa)) form the Helicase C-terminal domain. Positions 349–362 (RDSERRNRKEKPTE) are enriched in basic and acidic residues. A compositionally biased stretch (acidic residues) spans 511 to 523 (GDDEEAWEDEESE). A compositionally biased stretch (gly residues) spans 675 to 684 (SGGGPGGAGA). Residues 692–754 (EKAPKDADKF…VQEQKREKNA (63 aa)) show a composition bias toward basic and acidic residues.

The protein belongs to the DEAD box helicase family. DDX54/DBP10 subfamily.

It is found in the nucleus. The protein resides in the nucleolus. The catalysed reaction is ATP + H2O = ADP + phosphate + H(+). Functionally, ATP-binding RNA helicase involved in the biogenesis of 60S ribosomal subunits and is required for the normal formation of 25S and 5.8S rRNAs. The protein is ATP-dependent RNA helicase DBP10 (DBP10) of Chaetomium globosum (strain ATCC 6205 / CBS 148.51 / DSM 1962 / NBRC 6347 / NRRL 1970) (Soil fungus).